A 93-amino-acid chain; its full sequence is Conotoxin Mr105 (93 aa).

A signal peptide spans 1-22; sequence MQRGAVLLGVVALLVLWPQAGA. The propeptide occupies 23-33; the sequence is ELYDVNDPDVR.

Belongs to the F superfamily. In terms of processing, contains 4 disulfide bonds. Expressed by the venom duct.

Its subcellular location is the secreted. In Conus marmoreus (Marble cone), this protein is Conotoxin Mr105.